Reading from the N-terminus, the 490-residue chain is MESGSKMTARLMLAVGGAVLGSLQFGYNTGVINRPQKVIEDFYNHTWLYRYEEPISPATLTTLWSLSVAIFSVGGMIGSFSVGLFVNRFGRRNSMLMSNILAFLAAVLMGFSKMALSFEMLILGRFIIGLYSGLTTGFVPMYVGEVSPTALRGALGTFHQLGIVLGILIAQVFGLDLIMGNDSLWPLLLGFIFVPALLQCIILPFAPESPRFLLINRNEENKAKSVLKKLRGTTDVSSDLQEMKEESRQMMREKKVTIMELFRSPMYRQPILIAIVLQLSQQLSGINAVFYYSTSIFEKSGVEQPVYATIGSGVVNTAFTVVSLFVVERAGRRTLHLIGLAGMAGCAILMTIALTLLDQMPWMSYLSIVAIFGFVAFFEIGPGPIPWFIVAELFSQGPRPAAFAVAGLSNWTSNFIVGMGFQYIAQLCGSYVFIIFTVLLVLFFIFTYFKVPETKGRTFDEIAYRFRQGGASQSDKTPDEFHSLGADSQV.

Topologically, residues 1–10 (MESGSKMTAR) are cytoplasmic. A helical membrane pass occupies residues 11-32 (LMLAVGGAVLGSLQFGYNTGVI). Residues 33 to 65 (NRPQKVIEDFYNHTWLYRYEEPISPATLTTLWS) are Extracellular-facing. An N-linked (GlcNAc...) asparagine glycan is attached at N44. The helical transmembrane segment at 66–86 (LSVAIFSVGGMIGSFSVGLFV) threads the bilayer. Residues 87 to 89 (NRF) lie on the Cytoplasmic side of the membrane. The helical transmembrane segment at 90-111 (GRRNSMLMSNILAFLAAVLMGF) threads the bilayer. The Extracellular segment spans residues 112-119 (SKMALSFE). A helical transmembrane segment spans residues 120 to 143 (MLILGRFIIGLYSGLTTGFVPMYV). Residues 144–154 (GEVSPTALRGA) are Cytoplasmic-facing. Residues 155–175 (LGTFHQLGIVLGILIAQVFGL) form a helical membrane-spanning segment. D-glucose is bound at residue Q160. Residues 176-184 (DLIMGNDSL) are Extracellular-facing. The helical transmembrane segment at 185–205 (WPLLLGFIFVPALLQCIILPF) threads the bilayer. At 206–270 (APESPRFLLI…LFRSPMYRQP (65 aa)) the chain is on the cytoplasmic side. The chain crosses the membrane as a helical span at residues 271–292 (ILIAIVLQLSQQLSGINAVFYY). Residues 281-282 (QQ) and N287 contribute to the D-glucose site. The Extracellular portion of the chain corresponds to 293–305 (STSIFEKSGVEQP). The helical transmembrane segment at 306-327 (VYATIGSGVVNTAFTVVSLFVV) threads the bilayer. N316 serves as a coordination point for D-glucose. Over 328-333 (ERAGRR) the chain is Cytoplasmic. A helical membrane pass occupies residues 334–354 (TLHLIGLAGMAGCAILMTIAL). At 355–364 (TLLDQMPWMS) the chain is on the extracellular side. The helical transmembrane segment at 365-387 (YLSIVAIFGFVAFFEIGPGPIPW) threads the bilayer. Positions 379 and 387 each coordinate D-glucose. Topologically, residues 388–400 (FIVAELFSQGPRP) are cytoplasmic. The helical transmembrane segment at 401 to 421 (AAFAVAGLSNWTSNFIVGMGF) threads the bilayer. Residues 422–428 (QYIAQLC) are Extracellular-facing. The chain crosses the membrane as a helical span at residues 429 to 449 (GSYVFIIFTVLLVLFFIFTYF). The Cytoplasmic portion of the chain corresponds to 450–490 (KVPETKGRTFDEIAYRFRQGGASQSDKTPDEFHSLGADSQV). Residues 470-490 (GASQSDKTPDEFHSLGADSQV) are disordered.

This sequence belongs to the major facilitator superfamily. Sugar transporter (TC 2.A.1.1) family. Glucose transporter subfamily. In terms of assembly, interacts with isoform 1 of BSG. Retinal cones (at protein level).

The protein localises to the cell membrane. It localises to the photoreceptor inner segment. The enzyme catalyses D-glucose(out) = D-glucose(in). Functionally, facilitative glucose transporter, which is responsible for constitutive or basal glucose uptake. Has a very broad substrate specificity; can transport a wide range of aldoses including both pentoses and hexoses. Most important energy carrier of the brain: present at the blood-brain barrier and assures the energy-independent, facilitative transport of glucose into the brain. In association with BSG and NXNL1, promotes retinal cone survival by increasing glucose uptake into photoreceptors. Required for mesendoderm differentiation. The chain is Solute carrier family 2, facilitated glucose transporter member 1 from Gallus gallus (Chicken).